The sequence spans 502 residues: Arginine-specific demethylase JMJ22 (502 aa).

Residues 15-45 (KSKSKRLKLHQHEPESLFPEKEVEEEDEDEG) form a disordered region. Residues 24–35 (HQHEPESLFPEK) show a composition bias toward basic and acidic residues. An F-box domain is found at 80-126 (LGNLQILSDELVLDILGLLGANHLGVLATVTKSFYIFANHEPLWRNL). In terms of domain architecture, JmjC spans 279–439 (EKVPVLDSEY…NVLEFLKKPN (161 aa)). The Fe cation site is built by histidine 324, aspartate 326, and histidine 407.

The protein belongs to the JARID1 histone demethylase family. It depends on Fe(2+) as a cofactor. As to expression, expressed in inflorescences, roots and siliques, and, at low levels, in leaves and stems.

Its subcellular location is the nucleus. The enzyme catalyses N(omega),N(omega)-dimethyl-L-arginyl-[protein] + 2-oxoglutarate + O2 = N(omega)-methyl-L-arginyl-[protein] + formaldehyde + succinate + CO2. Functionally, histone demethylase that demethylates 'Arg-3' (H4R3me) of histone H4 with a specific activity for H4R3me2. Involved in the positive regulation of gene expression. Together with JMJ20, positively regulates seed germination by promoting the removal of repressive histone arginine methylations (e.g. H4R3me2) at GA3ox1 and GA3ox2 to trigger gibberellic acid (GA) biosynthesis. This chain is Arginine-specific demethylase JMJ22, found in Arabidopsis thaliana (Mouse-ear cress).